We begin with the raw amino-acid sequence, 348 residues long: D-alanine--D-alanine ligase (348 aa).

The ATP-grasp domain maps to K132–A334. ATP is bound at residue E162–E217. D288, E301, and N303 together coordinate Mg(2+).

It belongs to the D-alanine--D-alanine ligase family. Mg(2+) is required as a cofactor. Mn(2+) serves as cofactor.

It localises to the cytoplasm. It carries out the reaction 2 D-alanine + ATP = D-alanyl-D-alanine + ADP + phosphate + H(+). The protein operates within cell wall biogenesis; peptidoglycan biosynthesis. Cell wall formation. In Streptococcus gordonii (strain Challis / ATCC 35105 / BCRC 15272 / CH1 / DL1 / V288), this protein is D-alanine--D-alanine ligase.